We begin with the raw amino-acid sequence, 177 residues long: Ribulose bisphosphate carboxylase small subunit, chloroplastic 2 (177 aa).

A chloroplast-targeting transit peptide spans 1 to 56 (MASSMMASTAAVARAGPAQSNMVAPFNGLRSSVAFPATRKANKNLSTLPSNGGKVS).

This sequence belongs to the RuBisCO small chain family. As to quaternary structure, heterohexadecamer of 8 large and 8 small subunits.

The protein localises to the plastid. Its subcellular location is the chloroplast. Functionally, ruBisCO catalyzes two reactions: the carboxylation of D-ribulose 1,5-bisphosphate, the primary event in carbon dioxide fixation, as well as the oxidative fragmentation of the pentose substrate. Both reactions occur simultaneously and in competition at the same active site. Although the small subunit is not catalytic it is essential for maximal activity. The chain is Ribulose bisphosphate carboxylase small subunit, chloroplastic 2 from Lemna gibba (Swollen duckweed).